Reading from the N-terminus, the 203-residue chain is Cardiotrophin-1 (203 aa).

Belongs to the IL-6 superfamily. In terms of tissue distribution, expressed in the ventricle and atrium of adult rats. Also detected in the lung, kidney, liver, skeletal muscle, stomach and urinary bladder. Not detected in brain, colon, testis, spleen or thymus. Overexpressed in the ventricles in the case of hypertension and hypertrophy.

The protein resides in the secreted. In terms of biological role, induces cardiac myocyte hypertrophy in vitro. Binds to and activates the ILST/gp130 receptor. The protein is Cardiotrophin-1 (Ctf1) of Rattus norvegicus (Rat).